Reading from the N-terminus, the 149-residue chain is 3-dehydroquinate dehydratase (149 aa).

Catalysis depends on Y22, which acts as the Proton acceptor. Residues N73, H79, and D86 each coordinate substrate. H99 (proton donor) is an active-site residue. Residues 100–101 (LS) and R110 contribute to the substrate site.

It belongs to the type-II 3-dehydroquinase family. As to quaternary structure, homododecamer.

The enzyme catalyses 3-dehydroquinate = 3-dehydroshikimate + H2O. The protein operates within metabolic intermediate biosynthesis; chorismate biosynthesis; chorismate from D-erythrose 4-phosphate and phosphoenolpyruvate: step 3/7. In terms of biological role, catalyzes a trans-dehydration via an enolate intermediate. The protein is 3-dehydroquinate dehydratase of Prochlorococcus marinus (strain SARG / CCMP1375 / SS120).